Here is a 1002-residue protein sequence, read N- to C-terminus: Lon protease homolog, mitochondrial (1002 aa).

A Lon N-terminal domain is found at 102-313 (VIALPLPHRP…LTLELVKKEM (212 aa)). 468 to 475 (GPPGVGKT) lines the ATP pocket. The 185-residue stretch at 811 to 995 (QTPVGVVMGL…NEIFDIAFQS (185 aa)) folds into the Lon proteolytic domain. Active-site residues include serine 901 and lysine 944.

It belongs to the peptidase S16 family. As to quaternary structure, homohexamer or homoheptamer. Organized in a ring with a central cavity.

The protein resides in the mitochondrion matrix. It carries out the reaction Hydrolysis of proteins in presence of ATP.. Its function is as follows. ATP-dependent serine protease that mediates the selective degradation of misfolded, unassembled or oxidatively damaged polypeptides as well as certain short-lived regulatory proteins in the mitochondrial matrix. May also have a chaperone function in the assembly of inner membrane protein complexes. Participates in the regulation of mitochondrial gene expression and in the maintenance of the integrity of the mitochondrial genome. Binds to mitochondrial DNA in a site-specific manner. The sequence is that of Lon protease homolog, mitochondrial from Oryza sativa subsp. indica (Rice).